A 336-amino-acid chain; its full sequence is Transmembrane protease serine 12 (336 aa).

The first 18 residues, 1–18 (MASWALSAALLCLGGAFA), serve as a signal peptide directing secretion. Residues 19-312 (YSELHSLSLR…HYLSQGNINR (294 aa)) are Extracellular-facing. One can recognise a Peptidase S1 domain in the interval 66–306 (IIGGSQADTG…FQEWMTHYLS (241 aa)). A disulfide bond links C95 and C111. Catalysis depends on charge relay system residues H110 and D159. 3 disulfides stabilise this stretch: C194–C262, C225–C241, and C252–C282. N-linked (GlcNAc...) asparagine glycans are attached at residues N207, N237, and N246. The active-site Charge relay system is the S256. The helical transmembrane segment at 313 to 333 (LFNMDIVLGQVLTALGSVILL) threads the bilayer. The Cytoplasmic segment spans residues 334–336 (GVT).

Belongs to the peptidase S1 family. Exclusively expressed in the testis, from spermatocytes to elongated spermatids (at protein level).

The protein resides in the cell membrane. It is found in the cytoplasmic vesicle. Its subcellular location is the secretory vesicle. The protein localises to the acrosome. Required for male fertility. Plays a critical role in sperm capacitation and acrosome reactions during fertilization, and also plays a role in the regulation of proteins involved in spermatogenesis. Regulates protein pathways that promote chromosomal synapsis formation, double-strand break repair, formation of the inner mitochondrial membrane cristae and apoptosis in developing sperm. Required for normal sperm motility and binding to the zona pellucida, potentially via a role in ADAM3 protein maturation. The protein is Transmembrane protease serine 12 of Mus musculus (Mouse).